A 404-amino-acid chain; its full sequence is MQSSDRDLSGPEASPSVMPEVLSECSPAPTKSTAFDLFNLVLSYKRLEIYLEPLKDAGDGVRYLLRWQMPLCSLLTCLGLNILFLTLNEGAWYSVGALIISVPALLGYLQEVCRAQLPESELMRRKYHSVRQEDLQRVRLSRPEAVAEVKSFLIRLEAFLARLCYTCESAYRVLHWENPVVSSQFYGALLGMVCMLYLLPLCWVLALLNSTLFLGNGEFFRVVSEYRACLQRRMSPKQEECVCEGSALQDAGGRAVVLDSTPAPTPTEDLTPGSVEEAEEAEPDEEFKDAIEEDDEGTPCPAEDELTMQDNGFLSKNEVLRSKVSKLTERLRKRYPTNNFGNCAGCAATFSVLKKRRSCSNCGNSFCSRCCSFKVPKSSMGATAPEAQRETVFVCASCNQTLSK.

Positions 1-25 (MQSSDRDLSGPEASPSVMPEVLSEC) are disordered. Over 1-63 (MQSSDRDLSG…LKDAGDGVRY (63 aa)) the chain is Cytoplasmic. The interval 1–92 (MQSSDRDLSG…LFLTLNEGAW (92 aa)) is sufficient for homooligomerization. The sufficient for localization to endoplasmic reticulum tubular network and for interactions with REEP1, REEP5, ATL1, ATL2, ATL3 and SPAST stretch occupies residues 1–205 (MQSSDRDLSG…LYLLPLCWVL (205 aa)). Residues 51–64 (LEPLKDAGDGVRYL) form a necessary for interaction with RAB11A and function in neurite outgrowth region. Residues 64–85 (LLRWQMPLCSLLTCLGLNILFL) traverse the membrane as a helical segment. The Lumenal portion of the chain corresponds to 86–90 (TLNEG). The helical transmembrane segment at 91 to 109 (AWYSVGALIISVPALLGYL) threads the bilayer. The Cytoplasmic portion of the chain corresponds to 110-187 (QEVCRAQLPE…NPVVSSQFYG (78 aa)). An intramembrane region (helical) is located at residues 188 to 208 (ALLGMVCMLYLLPLCWVLALL). Residues 209 to 404 (NSTLFLGNGE…CASCNQTLSK (196 aa)) lie on the Cytoplasmic side of the membrane. Positions 259–299 (DSTPAPTPTEDLTPGSVEEAEEAEPDEEFKDAIEEDDEGTP) are disordered. Positions 271-354 (TPGSVEEAEE…GCAATFSVLK (84 aa)) are necessary for interaction with KIF5A. Residues 276-299 (EEAEEAEPDEEFKDAIEEDDEGTP) are compositionally biased toward acidic residues. A necessary for interaction with VAPA region spans residues 286 to 292 (EFKDAIE). The FYVE-type zinc finger occupies 337-403 (TNNFGNCAGC…VCASCNQTLS (67 aa)). The Zn(2+) site is built by Cys343, Cys346, Cys359, Cys362, Cys367, Cys370, Cys395, and Cys398.

In terms of assembly, can form homooligomers (monomers, dimers and tetramers). Interacts with FKBP8; may negatively regulate ZFYVE27 phosphorylation. Interacts with VAPA (via MSP domain); may regulate ZFYVE27 retention in the endoplasmic reticulum and its function in cell projections formation. Interacts with VAPB (via MSP domain). Interacts with RAB11A (GDP-bound form); regulates RAB11A. Interacts with RAB11B (GDP-bound form), REEP1, REEP5, ATL1, ATL2, ATL3, SPAST, SURF4, KIF5A, KIF5B, KIF5C and RTN3. In terms of processing, phosphorylated. Phosphorylation is induced by NGF through the MAPK/ERK pathway and modulates interaction with RAB11A.

The protein resides in the recycling endosome membrane. The protein localises to the endoplasmic reticulum membrane. It is found in the cell projection. It localises to the growth cone membrane. Key regulator of RAB11-dependent vesicular trafficking during neurite extension through polarized membrane transport. Promotes axonal elongation and contributes to the establishment of neuronal cell polarity. Involved in nerve growth factor-induced neurite formation in VAPA-dependent manner. Contributes to both the formation and stabilization of the tubular ER network. Involved in ER morphogenesis by regulating the sheet-to-tubule balance and possibly the density of tubule interconnections. Acts as an adapter protein that facilitates the interaction of KIF5A with VAPA, VAPB, SURF4, RAB11A, RAB11B and RTN3 and the ZFYVE27-KIF5A complex contributes to the transport of these proteins in neurons. Can induce formation of neurite-like membrane protrusions in non-neuronal cells in a KIF5A/B-dependent manner. The sequence is that of Protrudin (Zfyve27) from Rattus norvegicus (Rat).